A 683-amino-acid polypeptide reads, in one-letter code: uncharacterized protein (683 aa).

14 consecutive transmembrane segments (helical) span residues 12-32 (LLLY…MMGL), 41-61 (LWLG…IGLI), 84-104 (MAIA…GILF), 110-130 (GLAY…LLAP), 162-182 (IAVL…IQGV), 194-214 (FAVG…LGGM), 221-241 (QVAQ…MIAW), 377-397 (LNFV…PHIL), 413-433 (VAWA…LAAL), 495-515 (IAGL…AAAL), 548-568 (VTTA…VTSL), 573-593 (ILFL…PVLV), 603-623 (AAGA…YIIV), and 645-665 (IASG…VSLL).

This sequence belongs to the sodium:solute symporter (SSF) (TC 2.A.21) family.

The protein resides in the cell membrane. This is an uncharacterized protein from Cupriavidus necator (strain ATCC 17699 / DSM 428 / KCTC 22496 / NCIMB 10442 / H16 / Stanier 337) (Ralstonia eutropha).